Consider the following 342-residue polypeptide: N-acetyl-gamma-glutamyl-phosphate reductase (342 aa).

Residue C147 is part of the active site.

Belongs to the NAGSA dehydrogenase family. Type 1 subfamily.

Its subcellular location is the cytoplasm. The enzyme catalyses N-acetyl-L-glutamate 5-semialdehyde + phosphate + NADP(+) = N-acetyl-L-glutamyl 5-phosphate + NADPH + H(+). Its pathway is amino-acid biosynthesis; L-arginine biosynthesis; N(2)-acetyl-L-ornithine from L-glutamate: step 3/4. In terms of biological role, catalyzes the NADPH-dependent reduction of N-acetyl-5-glutamyl phosphate to yield N-acetyl-L-glutamate 5-semialdehyde. The chain is N-acetyl-gamma-glutamyl-phosphate reductase from Methanosphaera stadtmanae (strain ATCC 43021 / DSM 3091 / JCM 11832 / MCB-3).